The chain runs to 92 residues: Small ribosomal subunit protein uS19 (92 aa).

This sequence belongs to the universal ribosomal protein uS19 family.

Protein S19 forms a complex with S13 that binds strongly to the 16S ribosomal RNA. This is Small ribosomal subunit protein uS19 from Chelativorans sp. (strain BNC1).